Here is a 411-residue protein sequence, read N- to C-terminus: 2-oxoglutarate-dependent dioxygenase AOP3 (411 aa).

One can recognise a Fe2OG dioxygenase domain in the interval 259–356; that stretch reads GNASVGAKEA…RYAAALFSNP (98 aa). Fe cation-binding residues include H279, D281, and H336. A 2-oxoglutarate-binding site is contributed by R347.

This sequence belongs to the iron/ascorbate-dependent oxidoreductase family. It depends on Fe(2+) as a cofactor. In terms of tissue distribution, not expressed.

Its function is as follows. 2-oxoglutarate-dependent dioxygenase involved in glucosinolates biosynthesis. Catalyzes the conversion of methylsulfinylalkyl glucosinolates to hydroxyalkyl glucosinolates. The sequence is that of 2-oxoglutarate-dependent dioxygenase AOP3 (AOP3) from Arabidopsis thaliana (Mouse-ear cress).